An 844-amino-acid chain; its full sequence is Meiosis-specific protein PAIR3 (844 aa).

Disordered stretches follow at residues 41–389, 418–506, 532–604, and 616–669; these read TSSV…RERR, KLSS…RFSD, DDLF…QISI, and WLSD…EPEK. Residues 106 to 120 are compositionally biased toward polar residues; it reads QPDDNAIEQTGTFSF. 2 stretches are compositionally biased toward basic and acidic residues: residues 122-134 and 145-164; these read TRREQDSHLDQLD and RQVESADKNKPNSEMLRMKL. Polar residues-rich tracts occupy residues 191–208 and 218–229; these read QPKSQIANGPSSGRQKVF and TPAQFNSQTANK. 2 stretches are compositionally biased toward basic and acidic residues: residues 256 to 270 and 324 to 363; these read RKKEPTGSTHQDKSG and AKVEPKKAHCSDRISHKTTQDDMERKVPSKYIPSEKKGEK. 2 stretches are compositionally biased toward polar residues: residues 364 to 382 and 420 to 440; these read TNSFSSLSRTGKTAESCSR and SSPQLTSFKSKGKCSSISPQQ. The segment covering 441-456 has biased composition (basic and acidic residues); that stretch reads KENDNTHIPEASDRTA. Over residues 459 to 473 the composition is skewed to low complexity; that stretch reads NSFNSTPSPAANPSP. Residues 545 to 554 are compositionally biased toward polar residues; it reads RSRSTSFTSD. Residues 616–640 are compositionally biased toward basic and acidic residues; sequence WLSDVDSPDKSSIEHLGRKSHLKEG. Polar residues predominate over residues 646 to 661; sequence QLTSPTHFATSGTQET. The stretch at 731-765 forms a coiled coil; the sequence is VNAGKSKRKRLESTFEEQQEKLRILHEKFKEEVNQ.

In terms of tissue distribution, expressed in pollen mother cells and the ovule tissues during meiosis.

The protein resides in the chromosome. Its subcellular location is the nucleus. Functionally, plays a crucial role in homologous chromosome pairing and synapsis in meiosis. Does not seem required for cytokinesis. Is essential for meiotic bouquet formation, homologous chromosome pairing and normal recombination, and synaptonemal complex (SC) assembly. Required for the proper association of PAIR2 with chromosomes. In Oryza sativa subsp. japonica (Rice), this protein is Meiosis-specific protein PAIR3.